Here is a 542-residue protein sequence, read N- to C-terminus: MNGRRTIGEDGLVFGLVVIVALVAAVVVGTVLGHRYRVGPPVLLILSGSLLGLIPRFGDVQIDGEVVLLLFLPAILYWESMNTSFREIRWNLRVIVMFSIGLVIATAVAVSWTARALGMESHAAAVLGAVLSPTDAAAVAGLAKRLPRRALTVLRGESLINDGTALVLFAVTVAVAEGAAGIGPAALVGRFVVSYLGGIMAGLLVGGLVTLLRRRIDAPLEEGALSLLTPFAAFLLAQSLKCSGVVAVLVSALVLTYVGPTVIRARSRLQAHAFWDIATFLINGSLWVFVGVQIPGAIDHIAGEDGGLPRATVLALAVTGVVIATRIAWVQATTVLGHTVDRVLKKPTRHVGFRQRCVTSWAGFRGAVSLAAALAVPMTTNSGAPFPDRNLIIFVVSVVILVTVLVQGTSLPTVVRWARMPEDVAHANELQLARTRSAQAALDALPTVADELGVAPDLVKHLEKEYEERAVLVMADGADSATSDLAERNDLVRRVRLGVLQHQRQAVTTLRNQNLIDDIVLRELQAAMDLEEVQLLDPADAE.

Transmembrane regions (helical) follow at residues 12-32 (LVFGLVVIVALVAAVVVGTVL), 57-77 (FGDVQIDGEVVLLLFLPAILY), 94-114 (VIVMFSIGLVIATAVAVSWTA), 123-143 (AAAVLGAVLSPTDAAAVAGLA), 168-188 (LFAVTVAVAEGAAGIGPAALV), 191-211 (FVVSYLGGIMAGLLVGGLVTL), 216-236 (IDAPLEEGALSLLTPFAAFLL), 243-263 (SGVVAVLVSALVLTYVGPTVI), 277-297 (IATFLINGSLWVFVGVQIPGA), 313-333 (VLALAVTGVVIATRIAWVQAT), 358-378 (VTSWAGFRGAVSLAAALAVPM), and 391-411 (LIIFVVSVVILVTVLVQGTSL).

The protein belongs to the monovalent cation:proton antiporter 1 (CPA1) transporter (TC 2.A.36) family.

Its subcellular location is the cell membrane. This is an uncharacterized protein from Mycobacterium bovis (strain ATCC BAA-935 / AF2122/97).